A 228-amino-acid chain; its full sequence is MQLCSWNLRGSEQRFHPTTSCVDYYLRIEFKKLFELCKIMKNMKTKMVRLGTYVSQDAYKLLRELTELYGNQSNVLDQAIRLLYDVSKYGSKADRILIREKLINEFENILISKKNFMHLLEGKKEGLFDEDVITAVILSFVDESMDSKSFFPKMMDALKKIYVEGNRWFTNIEYKETESGYKVTFYHNLNSEFSDFASEYFRRFFKIGYKIVEEQKLNKLFILQVSEF.

This is an uncharacterized protein from Archaeoglobus fulgidus (strain ATCC 49558 / DSM 4304 / JCM 9628 / NBRC 100126 / VC-16).